The following is an 87-amino-acid chain: uncharacterized protein (87 aa).

Residues 1-19 (MLVLQLAVLVTAVYAFVHA) form the signal peptide. A helical transmembrane segment spans residues 51 to 71 (ILGFVFGVLGIVIAACAAGVY).

To M.tuberculosis Rv0476.

The protein localises to the membrane. This is an uncharacterized protein from Mycobacterium leprae (strain TN).